Consider the following 161-residue polypeptide: Large ribosomal subunit protein uL15 (161 aa).

The disordered stretch occupies residues 1-43 (MKLSDIADNAGARKKRMRVGRGIGSGKGKTSGRGGKGQTARSG). Over residues 21 to 37 (RGIGSGKGKTSGRGGKG) the composition is skewed to gly residues.

The protein belongs to the universal ribosomal protein uL15 family. As to quaternary structure, part of the 50S ribosomal subunit.

Binds to the 23S rRNA. The sequence is that of Large ribosomal subunit protein uL15 from Bradyrhizobium sp. (strain ORS 278).